A 465-amino-acid chain; its full sequence is Probable oxidoreductase AIM17 (465 aa).

The transit peptide at 1–16 directs the protein to the mitochondrion; that stretch reads MLRSNLCRGSRILARL. The Fe cation site is built by histidine 246, aspartate 248, and histidine 428.

This sequence belongs to the gamma-BBH/TMLD family. The cofactor is Fe(2+). It depends on L-ascorbate as a cofactor.

The protein resides in the mitochondrion. In Saccharomyces cerevisiae (strain ATCC 204508 / S288c) (Baker's yeast), this protein is Probable oxidoreductase AIM17 (AIM17).